We begin with the raw amino-acid sequence, 278 residues long: MALKHYNPTSPARRGLILVDRSSLWKGSPVKALTEGKNKTGGRNNKGHRTSRGIGGGHKQKYRLVDFKRRKWDMPATVQRIEYDPNRSAFIALVEYEDKTLSYILAPQRLGVGDSIVASRKADVKPGNAMEIGQAPLGTIVHNIELKPSKGGQLARAAGAYAQIVGRDKGMVMIRLNSGEQRYIRSDCMVTVGAVSNSDNANQNFAKAGRNRWLGRRPLTRGVAKNPVDHPHGGGEGRTSGGRHPVTPWGKPTKGARTRSNKATDKFIIRSRHAKKKR.

Disordered stretches follow at residues 32–57 and 221–278; these read ALTEGKNKTGGRNNKGHRTSRGIGGG and RGVA…KKKR. A compositionally biased stretch (basic residues) spans 269 to 278; it reads IRSRHAKKKR.

It belongs to the universal ribosomal protein uL2 family. In terms of assembly, part of the 50S ribosomal subunit. Forms a bridge to the 30S subunit in the 70S ribosome.

In terms of biological role, one of the primary rRNA binding proteins. Required for association of the 30S and 50S subunits to form the 70S ribosome, for tRNA binding and peptide bond formation. It has been suggested to have peptidyltransferase activity; this is somewhat controversial. Makes several contacts with the 16S rRNA in the 70S ribosome. The polypeptide is Large ribosomal subunit protein uL2 (Zymomonas mobilis subsp. mobilis (strain ATCC 31821 / ZM4 / CP4)).